Consider the following 221-residue polypeptide: Large ribosomal subunit protein uL16x (221 aa).

This sequence belongs to the universal ribosomal protein uL16 family. In terms of assembly, component of the small ribosomal subunit. Mature ribosomes consist of a small (40S) and a large (60S) subunit. The 40S subunit contains about 33 different proteins and 1 molecule of RNA (18S). The 60S subunit contains about 49 different proteins and 3 molecules of RNA (25S, 5.8S and 5S).

The chain is Large ribosomal subunit protein uL16x (RPL10C) from Arabidopsis thaliana (Mouse-ear cress).